A 1977-amino-acid chain; its full sequence is Protein rotatin homolog (1977 aa).

Residues 141 to 166 (SVSSLSSNDIPSQATESADSSSNQIY) are disordered.

The protein belongs to the rotatin family. As to quaternary structure, interacts with Rcd4;this complex is recruited to daughter centrioles before their conversion to centrosomes.

Its subcellular location is the cytoplasm. It is found in the cytoskeleton. The protein resides in the microtubule organizing center. The protein localises to the centrosome. It localises to the centriole. In terms of biological role, participes in the structural integrity of both centrioles and basal bodies and in centriole cohesion. Participates in the later stages of centriole assembly through the interaction with Rcd4 leading to the centriole to centrosome conversion. In Drosophila melanogaster (Fruit fly), this protein is Protein rotatin homolog.